Here is a 336-residue protein sequence, read N- to C-terminus: Di/tripeptide transport system permease protein DppB (336 aa).

A run of 6 helical transmembrane segments spans residues 10-30, 102-122, 145-165, 198-218, 257-277, and 307-327; these read GLLI…IRLI, LSLA…VIAA, IFWW…WTPV, AVRH…AVIA, LIPV…GAVL, and ILLV…LYGL. Residues 96 to 325 form the ABC transmembrane type-1 domain; that stretch reads FPATLELSLA…LVNFVVDILY (230 aa).

This sequence belongs to the binding-protein-dependent transport system permease family. OppBC subfamily. The complex is composed of two ATP-binding proteins (DppD and DppF), two transmembrane proteins (DppB and DppC) and a solute-binding protein (DppA1-A5). Five orthologous SBPs (DppA1-A5) are present in P.aeruginosa, which increases the substrate specificity of the DppBCDF transporter.

Its subcellular location is the cell inner membrane. Part of the ABC transporter DppABCDF involved in the uptake of various di/tripeptides. Is also involved in the uptake of phaseolotoxin, a toxic tripeptide inhibiting the enzyme ornithine carbamoyltransferase. Responsible for the translocation of the substrate across the membrane. The protein is Di/tripeptide transport system permease protein DppB of Pseudomonas aeruginosa (strain UCBPP-PA14).